We begin with the raw amino-acid sequence, 790 residues long: MSTPLRGSSPQVSFYESELDQEGGSDASHFTYRNYMEDDKINSFTFNMARKDQTQLFQRIILTNESESEIEEYAEVAEQLLDAINLREKYVFHPKIWKADAPVGEKPPYSPFESDESTNCATEHMFKEVNGVYFVYSNETDMKSNKALFSVPHTLASYYKDINNLMMLSSYGPAKTFTFKRLQLLESKFNMHTLLNDSLELFQQKTAPHRDFYNVRKVDTHVHHSSSMNQKHLLKFIKRKLKENPNEIVIFRDDKYLTLAEVFKSLNLDVDELSVDTLDVHADNNTFHRFDKFNLKYNPCGQSRLREIFLKTDNLIKGKYLAEISKEVFTDLESSKYQCAEYRLSIYGRKMSEWDTLASWIVDNDLFSTKVRWLIQVPRLYDVYRETSTTTFQDFLNNVFHPLFEVTKDPSSHPKLHLFLQQVVGIDCVDDESKFEKKFTEKFPVPGEWSSEHNPPYTYYLYYLYANLYTLNQFREEKGLNILTLRPHSGEAGEVDHMGAAFYLAHGINHGINLRKTPVLQYLYYLTQIGIAMSPLSNNSLFLTYNRNPFPAFFARGLNVSISTDDPLQFHYTKEPLMEEYSIATQVWRLSVCDICEIARNSVLQSGFEHNVKSHWLGPDYANSGGNDIKKTNISDIRVCFRNETLIEELHLILKSLQTLPNFKNLNINFLLDKLPSEITTGNDYKLKKAQLKLNGANKLRNSSVGSTPNNGTPSSSGTPSLSSPGAIVHLMKTKPYIPPPLSLNIKQENNNNNNNNNNNNNNNNNNNTNTNTNSNSTTTNQDDNSKSDK.

Positions 1–14 (MSTPLRGSSPQVSF) are enriched in polar residues. The tract at residues 1 to 26 (MSTPLRGSSPQVSFYESELDQEGGSD) is disordered. Positions 221 and 223 each coordinate Zn(2+). Substrate is bound by residues histidine 223 and 292 to 297 (KFNLKY). Histidine 488 is a binding site for Zn(2+). Glutamate 491 provides a ligand contact to substrate. The active-site Proton acceptor is histidine 510. Aspartate 565 lines the Zn(2+) pocket. 566–569 (DPLQ) provides a ligand contact to substrate. Disordered stretches follow at residues 698–726 (NKLRNSSVGSTPNNGTPSSSGTPSLSSPG) and 739–790 (PPPL…KSDK). Composition is skewed to low complexity over residues 706–726 (GSTPNNGTPSSSGTPSLSSPG) and 750–781 (NNNNNNNNNNNNNNNNNNNTNTNTNSNSTTTN).

It belongs to the metallo-dependent hydrolases superfamily. Adenosine and AMP deaminases family. Homodimer. Zn(2+) serves as cofactor.

It is found in the cytoplasm. It carries out the reaction AMP + H2O + H(+) = IMP + NH4(+). The protein operates within purine metabolism; IMP biosynthesis via salvage pathway; IMP from AMP: step 1/1. With respect to regulation, activated by ATP, inhibited by GTP, EDTA and inorganic phosphate. Catalyzes the conversion of adenosine monophosphate (AMP) to inosine monophosphate (IMP) and ammonia (NH4(+)). Participates in the regulation of the adenylated nucleotide pool and the interconversion to guanylated nucleotides during early morphodifferentiation. The protein is AMP deaminase (amdA) of Dictyostelium discoideum (Social amoeba).